The chain runs to 152 residues: SsrA-binding protein (152 aa).

This sequence belongs to the SmpB family.

It localises to the cytoplasm. Required for rescue of stalled ribosomes mediated by trans-translation. Binds to transfer-messenger RNA (tmRNA), required for stable association of tmRNA with ribosomes. tmRNA and SmpB together mimic tRNA shape, replacing the anticodon stem-loop with SmpB. tmRNA is encoded by the ssrA gene; the 2 termini fold to resemble tRNA(Ala) and it encodes a 'tag peptide', a short internal open reading frame. During trans-translation Ala-aminoacylated tmRNA acts like a tRNA, entering the A-site of stalled ribosomes, displacing the stalled mRNA. The ribosome then switches to translate the ORF on the tmRNA; the nascent peptide is terminated with the 'tag peptide' encoded by the tmRNA and targeted for degradation. The ribosome is freed to recommence translation, which seems to be the essential function of trans-translation. The sequence is that of SsrA-binding protein from Rickettsia typhi (strain ATCC VR-144 / Wilmington).